A 291-amino-acid polypeptide reads, in one-letter code: Probable protein S-acyltransferase 12 (291 aa).

2 helical membrane-spanning segments follow: residues 14–34 (GYFM…AVVV) and 49–69 (LSAL…MLLW). Positions 111–161 (GYCTKCRNVKPPRCHHCSVCQRCVLKMDHHCVWIVNCVGARNYKFFLLFLF) constitute a DHHC domain. The active-site S-palmitoyl cysteine intermediate is Cys-141. 2 helical membrane-spanning segments follow: residues 155–175 (FFLL…IVLL) and 198–218 (LVLA…FVVM).

This sequence belongs to the DHHC palmitoyltransferase family.

Its subcellular location is the cell membrane. The catalysed reaction is L-cysteinyl-[protein] + hexadecanoyl-CoA = S-hexadecanoyl-L-cysteinyl-[protein] + CoA. In terms of biological role, palmitoyl acyltransferase. The sequence is that of Probable protein S-acyltransferase 12 (PAT12) from Arabidopsis thaliana (Mouse-ear cress).